The sequence spans 68 residues: DNA-directed RNA polymerase subunit omega (68 aa).

Belongs to the RNA polymerase subunit omega family. In terms of assembly, the RNAP catalytic core consists of 2 alpha, 1 beta, 1 beta' and 1 omega subunit. When a sigma factor is associated with the core the holoenzyme is formed, which can initiate transcription.

The enzyme catalyses RNA(n) + a ribonucleoside 5'-triphosphate = RNA(n+1) + diphosphate. Promotes RNA polymerase assembly. Latches the N- and C-terminal regions of the beta' subunit thereby facilitating its interaction with the beta and alpha subunits. The chain is DNA-directed RNA polymerase subunit omega from Desulforapulum autotrophicum (strain ATCC 43914 / DSM 3382 / VKM B-1955 / HRM2) (Desulfobacterium autotrophicum).